The sequence spans 780 residues: Vezatin (780 aa).

The next 2 helical transmembrane spans lie at 140–160 (ATPNTWDVSLLFAFISLLIMF) and 162–182 (TCWIVSSWLVWGIILFLYLII). The stretch at 430 to 467 (VRSLQLHLKALLNEVIILEDELEKLVCTKETQELLSEA) forms a coiled coil. 2 disordered regions span residues 620–718 (DPVE…PRDT) and 757–780 (QEQTFGDEEEEQLVEGGENEVEEK). A compositionally biased stretch (polar residues) spans 624-643 (SVSNSEPPMNSDTEKVNSNA). Basic and acidic residues-rich tracts occupy residues 647–663 (ETSKPCAGDKEDSRTEY) and 690–699 (TMCHQHESEA). Residues 702–711 (PQAAAAGATA) are compositionally biased toward low complexity. Over residues 761 to 780 (FGDEEEEQLVEGGENEVEEK) the composition is skewed to acidic residues.

Belongs to the vezatin family. In terms of assembly, interacts with USH2A (via the cytoplasmic region); the interaction associates VEZT with the USH2 complex at the stereocilia base. Interacts with myosin MYO7A and the cadherin-catenins complex. In terms of tissue distribution, expressed in developing cochlear hair cells. Isoform 1, isoform 2 and isoform 3 are expressed in testis. In the seminiferous epithelium, present exclusively in the acrosome of spermatids (at protein level).

Its subcellular location is the cell membrane. The protein localises to the cell projection. It localises to the stereocilium membrane. The protein resides in the cell junction. It is found in the adherens junction. Its subcellular location is the nucleus. The protein localises to the cytoplasmic vesicle. It localises to the secretory vesicle. The protein resides in the acrosome. In terms of biological role, plays a pivotal role in the establishment of adherens junctions and their maintenance in adult life. Required for morphogenesis of the preimplantation embryo, and for the implantation process. This is Vezatin from Mus musculus (Mouse).